Reading from the N-terminus, the 353-residue chain is MSVLSDLINLNLSDTTEKIIAEYIWVGGSGVDLRSKARTLSGPVNDPSKLPKWNYDGSSTGQAPGKDSEVILWPQAIFKDPFRRGNNILVMCDTYTPAGEPIPTNKRHAAAKIFSHPDVVAEEPWFGIEQEYTLLQKDIHWPIGWPLGGFPGPQGPYYCGTGAEKAFGRDIVDSHYKACLYAGINISGINAEVMPGQWEFQVGPSVGISAGDELWVARYILERITEIAGVVLSLDPKPIPGDWNGAGAHTNYSTKSMRNDGGYEVIKKAIEKLGKRHNEHIAAYGEGNERRLTGRHETADISTFFWGVANRGASIRVGRDTEKEGKGYFEDRRPASNMDPYVVTSMIAETTLL.

Residues 19–99 form the GS beta-grasp domain; the sequence is IIAEYIWVGG…VMCDTYTPAG (81 aa). Residues 106–353 enclose the GS catalytic domain; that stretch reads KRHAAAKIFS…TSMIAETTLL (248 aa).

This sequence belongs to the glutamine synthetase family. As to quaternary structure, homooctamer.

The protein resides in the cytoplasm. The catalysed reaction is L-glutamate + NH4(+) + ATP = L-glutamine + ADP + phosphate + H(+). The protein is Glutamine synthetase nodule isozyme of Lupinus luteus (European yellow lupine).